The following is a 123-amino-acid chain: Urotensin-2 (123 aa).

The N-terminal stretch at 1-20 (MDRVPFCCLLFVGLLNPLLS) is a signal peptide. The propeptide occupies 21–104 (FPVTDTGEMS…TVLSRLLART (84 aa)). The tract at residues 63-91 (EAEGSLGQADPSAETPTPRGSLRKALTGQ) is disordered. C117 and C122 are disulfide-bonded.

This sequence belongs to the urotensin-2 family. In terms of tissue distribution, brain specific.

The protein resides in the secreted. Highly potent vasoconstrictor. This Rattus norvegicus (Rat) protein is Urotensin-2 (Uts2).